The following is a 253-amino-acid chain: 5'/3'-nucleotidase SurE (253 aa).

Residues D8, D9, S39, and N92 each coordinate a divalent metal cation.

The protein belongs to the SurE nucleotidase family. The cofactor is a divalent metal cation.

The protein resides in the cytoplasm. The enzyme catalyses a ribonucleoside 5'-phosphate + H2O = a ribonucleoside + phosphate. The catalysed reaction is a ribonucleoside 3'-phosphate + H2O = a ribonucleoside + phosphate. It catalyses the reaction [phosphate](n) + H2O = [phosphate](n-1) + phosphate + H(+). Nucleotidase with a broad substrate specificity as it can dephosphorylate various ribo- and deoxyribonucleoside 5'-monophosphates and ribonucleoside 3'-monophosphates with highest affinity to 3'-AMP. Also hydrolyzes polyphosphate (exopolyphosphatase activity) with the preference for short-chain-length substrates (P20-25). Might be involved in the regulation of dNTP and NTP pools, and in the turnover of 3'-mononucleotides produced by numerous intracellular RNases (T1, T2, and F) during the degradation of various RNAs. The sequence is that of 5'/3'-nucleotidase SurE from Klebsiella pneumoniae (strain 342).